Consider the following 614-residue polypeptide: uncharacterized protein (614 aa).

A run of 2 helical transmembrane segments spans residues 494–516 and 552–574; these read VAYW…GSTL and LLIG…IVHA. The disordered stretch occupies residues 588–614; the sequence is AVRPRADKDIQTLTHRDEAEEDQEEDS. A compositionally biased stretch (basic and acidic residues) spans 591-605; that stretch reads PRADKDIQTLTHRDE.

Its subcellular location is the cell membrane. This is an uncharacterized protein from Treponema pallidum (strain Nichols).